Here is a 694-residue protein sequence, read N- to C-terminus: Transcription activator of gluconeogenesis PTRG_06536 (694 aa).

Residues 1-57 are disordered; that stretch reads MTTPDAEDASPSPEYRSDQDDDMAAEQTTDRQSGDASPTQKPANGKPNAKDPLRPRR. Residues 64-92 constitute a DNA-binding region (zn(2)-C6 fungal-type); that stretch reads CFACQRAHLTCGDERPCGRCIKRGLQDHC. Disordered stretches follow at residues 175 to 216, 289 to 369, 384 to 420, and 539 to 569; these read FSNQ…FGPL, AMAF…GDNP, AQRSPLVSRPQQENRPPTTALQSIHANGIRKRQRDTK, and VNLGTNRESSESDTSTQNTTPNLSAQDSEGA. A compositionally biased stretch (polar residues) spans 193–204; it reads SVQNAGAPSTMS. Over residues 205 to 214 the composition is skewed to low complexity; the sequence is QGQQGMQQFG. Residues 302–324 are compositionally biased toward polar residues; that stretch reads WQETQSRQGSMHVHTPNNTSGSG. A compositionally biased stretch (low complexity) spans 349–363; that stretch reads ATHSTASPASTDAST. The segment covering 392–408 has biased composition (polar residues); that stretch reads RPQQENRPPTTALQSIH. One can recognise a PAS domain in the interval 485–559; sequence LQRHLMTLQE…SDTSTQNTTP (75 aa).

Belongs to the ERT1/acuK family.

The protein resides in the nucleus. In terms of biological role, transcription factor which regulates nonfermentable carbon utilization. Activator of gluconeogenetic genes. This Pyrenophora tritici-repentis (strain Pt-1C-BFP) (Wheat tan spot fungus) protein is Transcription activator of gluconeogenesis PTRG_06536.